The following is a 1070-amino-acid chain: Error-prone DNA polymerase (1070 aa).

The protein belongs to the DNA polymerase type-C family. DnaE2 subfamily.

It localises to the cytoplasm. It carries out the reaction DNA(n) + a 2'-deoxyribonucleoside 5'-triphosphate = DNA(n+1) + diphosphate. Its function is as follows. DNA polymerase involved in damage-induced mutagenesis and translesion synthesis (TLS). It is not the major replicative DNA polymerase. This chain is Error-prone DNA polymerase, found in Aromatoleum aromaticum (strain DSM 19018 / LMG 30748 / EbN1) (Azoarcus sp. (strain EbN1)).